Here is a 316-residue protein sequence, read N- to C-terminus: L-lactate dehydrogenase 1 (316 aa).

Residues Val17, Asp38, Lys43, and Tyr69 each coordinate NAD(+). Substrate contacts are provided by residues Arg92 and Asn124–Asp127. NAD(+) contacts are provided by residues Val122–Asn124 and Thr147. Asp152–Arg155 contacts substrate. Catalysis depends on His179, which acts as the Proton acceptor. Thr234 is a substrate binding site.

The protein belongs to the LDH/MDH superfamily. LDH family. As to quaternary structure, homotetramer.

The protein resides in the cytoplasm. It carries out the reaction (S)-lactate + NAD(+) = pyruvate + NADH + H(+). Its pathway is fermentation; pyruvate fermentation to lactate; (S)-lactate from pyruvate: step 1/1. In terms of biological role, catalyzes the conversion of lactate to pyruvate. In Bifidobacterium longum subsp. longum (strain ATCC 15707 / DSM 20219 / JCM 1217 / NCTC 11818 / E194b), this protein is L-lactate dehydrogenase 1.